The primary structure comprises 370 residues: Glutamate 5-kinase (370 aa).

Residue Lys13 coordinates ATP. 3 residues coordinate substrate: Ser54, Asp140, and Asn152. ATP contacts are provided by residues Ser172–Asp173 and Ser214–Lys220. One can recognise a PUA domain in the interval Thr278 to Arg355.

It belongs to the glutamate 5-kinase family.

The protein resides in the cytoplasm. It carries out the reaction L-glutamate + ATP = L-glutamyl 5-phosphate + ADP. Its pathway is amino-acid biosynthesis; L-proline biosynthesis; L-glutamate 5-semialdehyde from L-glutamate: step 1/2. Catalyzes the transfer of a phosphate group to glutamate to form L-glutamate 5-phosphate. The polypeptide is Glutamate 5-kinase (Paramagnetospirillum magneticum (strain ATCC 700264 / AMB-1) (Magnetospirillum magneticum)).